The sequence spans 257 residues: uncharacterized protein (257 aa).

7–14 contributes to the ATP binding site; the sequence is GKGGVGKT.

It to M.jannaschii MJ0084 and MJ0685.

This is an uncharacterized protein from Methanocaldococcus jannaschii (strain ATCC 43067 / DSM 2661 / JAL-1 / JCM 10045 / NBRC 100440) (Methanococcus jannaschii).